Reading from the N-terminus, the 262-residue chain is Type III pantothenate kinase (262 aa).

ATP is bound at residue 5 to 12 (DAGNTRSK). Substrate-binding positions include Tyr102 and 110–113 (GSDR). The active-site Proton acceptor is Asp112. Asp132 contributes to the K(+) binding site. Thr135 lines the ATP pocket. Substrate is bound at residue Thr190.

This sequence belongs to the type III pantothenate kinase family. As to quaternary structure, homodimer. NH4(+) serves as cofactor. It depends on K(+) as a cofactor.

The protein localises to the cytoplasm. The catalysed reaction is (R)-pantothenate + ATP = (R)-4'-phosphopantothenate + ADP + H(+). It participates in cofactor biosynthesis; coenzyme A biosynthesis; CoA from (R)-pantothenate: step 1/5. Catalyzes the phosphorylation of pantothenate (Pan), the first step in CoA biosynthesis. The polypeptide is Type III pantothenate kinase (Idiomarina loihiensis (strain ATCC BAA-735 / DSM 15497 / L2-TR)).